A 311-amino-acid polypeptide reads, in one-letter code: Ribonuclease Z (311 aa).

7 residues coordinate Zn(2+): His61, His63, Asp65, His66, His139, Asp210, and His268. The Proton acceptor role is filled by Asp65.

This sequence belongs to the RNase Z family. Homodimer. The cofactor is Zn(2+).

It carries out the reaction Endonucleolytic cleavage of RNA, removing extra 3' nucleotides from tRNA precursor, generating 3' termini of tRNAs. A 3'-hydroxy group is left at the tRNA terminus and a 5'-phosphoryl group is left at the trailer molecule.. Functionally, zinc phosphodiesterase, which displays some tRNA 3'-processing endonuclease activity. Probably involved in tRNA maturation, by removing a 3'-trailer from precursor tRNA. The polypeptide is Ribonuclease Z (Haloarcula marismortui (strain ATCC 43049 / DSM 3752 / JCM 8966 / VKM B-1809) (Halobacterium marismortui)).